The chain runs to 941 residues: PHD finger protein 14 (941 aa).

A disordered region spans residues 22–295 (DYDSSDDSDF…LSQSKSNEDS (274 aa)). Phosphoserine occurs at positions 26 and 29. The span at 36–47 (ASDSEGSGNGSE) shows a compositional bias: low complexity. The span at 60–72 (DSEENILEEELNE) shows a compositional bias: acidic residues. 3 stretches are compositionally biased toward basic and acidic residues: residues 74-85 (IQVKEEQLKNST), 94-109 (QLIK…NGER), and 116-132 (KEKE…EKAT). Position 84 is a phosphoserine (Ser84). Residues 133-166 (VSDSAAASAAGTTPATSPPAVTSPSVPTTTTTTT) show a composition bias toward low complexity. Phosphoserine is present on Ser189. Composition is skewed to acidic residues over residues 194–205 (NAMDDYDSEDDN) and 226–249 (DGDN…EGND). Tyr199 bears the Phosphotyrosine mark. Ser201 bears the Phosphoserine mark. Thr280 carries the phosphothreonine modification. Residues 281-290 (NDSLTLSQSK) show a composition bias toward polar residues. 5 positions are modified to phosphoserine: Ser283, Ser287, Ser291, Ser295, and Ser301. The segment at 312-373 (ILICCVCLGD…PWFCDACKCG (62 aa)) adopts a PHD-type 1 zinc-finger fold. Positions 315, 318, 332, 335, 340, and 343 each coordinate Zn(2+). Ser352 bears the Phosphoserine mark. Residues Cys367, Cys370, Cys378, Cys381, His398, Cys401, Cys434, Cys437, Cys451, Cys456, His461, Cys464, Cys488, and His491 each contribute to the Zn(2+) site. The segment at 375-408 (SPSCELCPNQDGIFKETDAGRWVHIVCALYVPGV) adopts a C2HC pre-PHD-type zinc-finger fold. Residues 432–492 (KECSFCEDPR…PFFAYCKQHA (61 aa)) form a PHD-type 2 zinc finger. Ser523 is subject to Phosphoserine. A coiled-coil region spans residues 623-671 (MIQIQENMAEQKNIKDKLENEQEKLHVEYNKLCESLEELQNLNGKLRSE). The segment at 718–772 (LYSCGICKKNHDQHLLLLCDTCKLHYHLGCLDPPLTRMPRKTKNSYWQCSECDQA) adopts a PHD-type 3 zinc-finger fold. Zn(2+)-binding residues include Cys721, Cys724, Cys736, Cys739, His744, Cys747, Cys766, and Cys769. Phosphoserine occurs at positions 774, 775, and 828. A disordered region spans residues 804 to 855 (VPQDVPPEPKKIPIRNTRTRGRKRSFVPEEEKHEERVPRERRQRQSVLQKKP). Positions 829–843 (FVPEEEKHEERVPRE) are enriched in basic and acidic residues. The PHD-type 4 zinc finger occupies 861–914 (RTECSTCKGTGDNENLVRCDECRLCYHFGCLDPPLKKSPKQTGYGWICQECDSS). Cys864, Cys867, Cys879, Cys882, His887, Cys890, Cys908, and Cys911 together coordinate Zn(2+). The interval 912–941 (DSSSSKEDENEAEKKNASQELSMEQKTPKK) is disordered. A compositionally biased stretch (basic and acidic residues) spans 915 to 928 (SSKEDENEAEKKNA). The span at 930 to 941 (QELSMEQKTPKK) shows a compositional bias: polar residues.

As to expression, high levels detected in testis, lung and spleen and low levels in muscle, heart, intestine and kidney (at protein level). Widely expressed in adult with increased levels in intestine, colon and lung.

Its subcellular location is the nucleus. The protein resides in the chromosome. It is found in the cytoplasm. In terms of biological role, histone-binding protein. Binds preferentially to unmodified histone H3 but can also bind to a lesser extent to histone H3 trimethylated at 'Lys-9' (H3K9me3) as well as to histone H3 monomethylated at 'Lys-27' (H3K27ac) and trimethylated at 'Lys-27' (H3K27me3). Represses PDGFRA expression, thus playing a role in regulation of mesenchymal cell proliferation. Suppresses the expression of CDKN1A/p21 by reducing the level of trimethylation of histone H3 'Lys-4', leading to enhanced proliferation of germinal center B cells. The protein is PHD finger protein 14 (Phf14) of Mus musculus (Mouse).